We begin with the raw amino-acid sequence, 220 residues long: Large ribosomal subunit protein uL3 (220 aa).

Residues lysine 61 to aspartate 81 are disordered.

The protein belongs to the universal ribosomal protein uL3 family. As to quaternary structure, part of the 50S ribosomal subunit. Forms a cluster with proteins L14 and L19.

Functionally, one of the primary rRNA binding proteins, it binds directly near the 3'-end of the 23S rRNA, where it nucleates assembly of the 50S subunit. This Staphylococcus epidermidis (strain ATCC 35984 / DSM 28319 / BCRC 17069 / CCUG 31568 / BM 3577 / RP62A) protein is Large ribosomal subunit protein uL3.